The primary structure comprises 885 residues: Leucine--tRNA ligase (885 aa).

Residues 48–58 (PYPSGKLHMGH) carry the 'HIGH' region motif. The 'KMSKS' region motif lies at 639–643 (TMSKS). Lys-642 is an ATP binding site.

Belongs to the class-I aminoacyl-tRNA synthetase family.

It localises to the cytoplasm. It catalyses the reaction tRNA(Leu) + L-leucine + ATP = L-leucyl-tRNA(Leu) + AMP + diphosphate. The protein is Leucine--tRNA ligase of Bordetella petrii (strain ATCC BAA-461 / DSM 12804 / CCUG 43448).